The primary structure comprises 363 residues: Histidinol-phosphate aminotransferase (363 aa).

Lysine 218 is subject to N6-(pyridoxal phosphate)lysine.

It belongs to the class-II pyridoxal-phosphate-dependent aminotransferase family. Histidinol-phosphate aminotransferase subfamily. As to quaternary structure, homodimer. Pyridoxal 5'-phosphate is required as a cofactor.

The enzyme catalyses L-histidinol phosphate + 2-oxoglutarate = 3-(imidazol-4-yl)-2-oxopropyl phosphate + L-glutamate. Its pathway is amino-acid biosynthesis; L-histidine biosynthesis; L-histidine from 5-phospho-alpha-D-ribose 1-diphosphate: step 7/9. This Xanthomonas oryzae pv. oryzae (strain MAFF 311018) protein is Histidinol-phosphate aminotransferase.